Consider the following 344-residue polypeptide: Methionine import ATP-binding protein MetN 1 (344 aa).

An ABC transporter domain is found at 2-241 (IEIRNLSQRF…PHHEVTRALI (240 aa)). ATP is bound at residue 38 to 45 (GRSGAGKS).

It belongs to the ABC transporter superfamily. Methionine importer (TC 3.A.1.24) family. In terms of assembly, the complex is composed of two ATP-binding proteins (MetN), two transmembrane proteins (MetI) and a solute-binding protein (MetQ).

The protein localises to the cell inner membrane. It carries out the reaction L-methionine(out) + ATP + H2O = L-methionine(in) + ADP + phosphate + H(+). The enzyme catalyses D-methionine(out) + ATP + H2O = D-methionine(in) + ADP + phosphate + H(+). Part of the ABC transporter complex MetNIQ involved in methionine import. Responsible for energy coupling to the transport system. This is Methionine import ATP-binding protein MetN 1 from Burkholderia mallei (strain ATCC 23344).